The chain runs to 101 residues: Small ribosomal subunit protein uS14 (101 aa).

This sequence belongs to the universal ribosomal protein uS14 family. In terms of assembly, part of the 30S ribosomal subunit. Contacts proteins S3 and S10.

Its function is as follows. Binds 16S rRNA, required for the assembly of 30S particles and may also be responsible for determining the conformation of the 16S rRNA at the A site. The sequence is that of Small ribosomal subunit protein uS14 from Rhizobium johnstonii (strain DSM 114642 / LMG 32736 / 3841) (Rhizobium leguminosarum bv. viciae).